A 402-amino-acid chain; its full sequence is Bisdemethoxycurcumin synthase (402 aa).

C174 acts as the Acyl-thioester intermediate in catalysis.

This sequence belongs to the thiolase-like superfamily. Chalcone/stilbene synthases family. Homodimer.

It catalyses the reaction 2 4-coumaroyl-CoA + malonyl-CoA + H2O + H(+) = bisdemethoxycurcumin + 2 CO2 + 3 CoA. It participates in secondary metabolite biosynthesis; flavonoid biosynthesis. Plant-specific type III polyketide synthase (PKS) that catalyzes the one-pot formation of the C6-C7-C6 diarylheptanoid scaffold of bisdemethoxycurcumin by the condensation of two molecules of 4-coumaroyl-CoA and one molecule of malonyl-CoA. The polypeptide is Bisdemethoxycurcumin synthase (Oryza sativa subsp. japonica (Rice)).